Consider the following 69-residue polypeptide: Large ribosomal subunit protein bL31 (69 aa).

Cys-16, Cys-18, Cys-38, and Cys-41 together coordinate Zn(2+).

Belongs to the bacterial ribosomal protein bL31 family. Type A subfamily. As to quaternary structure, part of the 50S ribosomal subunit. Zn(2+) serves as cofactor.

Its function is as follows. Binds the 23S rRNA. This chain is Large ribosomal subunit protein bL31, found in Thermobifida fusca (strain YX).